Consider the following 396-residue polypeptide: Purine ribonucleoside efflux pump NepI (396 aa).

Over 1 to 21 (MSEFIAENRGADAITRPNWSA) the chain is Cytoplasmic. A helical membrane pass occupies residues 22-42 (VFSVAFCVACLIIVEFLPVSL). The Periplasmic portion of the chain corresponds to 43-54 (LTPMAQDLGISE). A helical membrane pass occupies residues 55–75 (GVAGQSVTVTAFVAMFASLFI). At 76 to 85 (TQTIQATDRR) the chain is on the cytoplasmic side. The helical transmembrane segment at 86-106 (NVVILFAVLLTLSCLLVSFAN) threads the bilayer. Residue S107 is a topological domain, periplasmic. The chain crosses the membrane as a helical span at residues 108-128 (FSLLLIGRACLGLALGGFWAM). Over 129-147 (SASLTMRLVPPRTVPKALS) the chain is Cytoplasmic. The chain crosses the membrane as a helical span at residues 148–168 (VIFGAVSIALVIAAPLGSFLG). At 169-175 (ELIGWRN) the chain is on the periplasmic side. The chain crosses the membrane as a helical span at residues 176 to 196 (VFNAAAVMGVLCIFWIIKSLP). Residues 197 to 215 (SLPGEPSHQKQNTFRLLQR) are Cytoplasmic-facing. Residues 216–236 (PGVMAGMIAIFMSFAGQFAFF) form a helical membrane-spanning segment. Residues 237–255 (TYIRPVYMNLAGFSVDGLT) are Periplasmic-facing. The helical transmembrane segment at 256–276 (LVLLSFGIASFIGTSLSSFIL) threads the bilayer. The Cytoplasmic portion of the chain corresponds to 277 to 281 (KRSVK). A helical transmembrane segment spans residues 282–302 (LALAGAPLILAVSALVLTLWG). Residues 303–305 (SDK) are Periplasmic-facing. A helical transmembrane segment spans residues 306-326 (IVATGVAIIWGLTFALVPVGW). The Cytoplasmic portion of the chain corresponds to 327-343 (STWITRSLADQAEKAGS). Residues 344-364 (IQVAVIQLANTCGAAIGGYAL) traverse the membrane as a helical segment. The Periplasmic portion of the chain corresponds to 365-366 (DN). A helical transmembrane segment spans residues 367-387 (IGLTSPLMFSGTLMLLTALLV). The Cytoplasmic segment spans residues 388–396 (TAKVKMKKS).

Belongs to the major facilitator superfamily. DHA1 family. NepI (TC 2.A.1.2.26) subfamily.

It is found in the cell inner membrane. It catalyses the reaction inosine(in) + H(+)(out) = inosine(out) + H(+)(in). The enzyme catalyses guanosine(in) + H(+)(out) = guanosine(out) + H(+)(in). Functionally, involved in the efflux of purine ribonucleosides, such as inosine and guanosine. This Shigella sonnei (strain Ss046) protein is Purine ribonucleoside efflux pump NepI.